Here is a 741-residue protein sequence, read N- to C-terminus: Catalase-peroxidase (741 aa).

The segment at residues 86–208 is a cross-link (tryptophyl-tyrosyl-methioninium (Trp-Tyr) (with M-234)); that stretch reads WHSAGSYRIF…FAATEMGLIY (123 aa). Residue His87 is the Proton acceptor of the active site. The segment at residues 208-234 is a cross-link (tryptophyl-tyrosyl-methioninium (Tyr-Met) (with W-86)); that stretch reads YVNPEGPGGNPDPLGSAQEIRVAFRRM. His249 serves as a coordination point for heme b.

This sequence belongs to the peroxidase family. Peroxidase/catalase subfamily. As to quaternary structure, homodimer or homotetramer. The cofactor is heme b. Formation of the three residue Trp-Tyr-Met cross-link is important for the catalase, but not the peroxidase activity of the enzyme.

The catalysed reaction is H2O2 + AH2 = A + 2 H2O. It carries out the reaction 2 H2O2 = O2 + 2 H2O. Its function is as follows. Bifunctional enzyme with both catalase and broad-spectrum peroxidase activity. Also displays NADH oxidase, INH lyase and isonicotinoyl-NAD synthase activities. This is Catalase-peroxidase from Archaeoglobus fulgidus (strain ATCC 49558 / DSM 4304 / JCM 9628 / NBRC 100126 / VC-16).